Here is a 249-residue protein sequence, read N- to C-terminus: Domoic acid biosynthesis cluster protein B (249 aa).

Its function is as follows. Unknown function: part of the gene cluster that mediates the biosynthesis of domoic acid (DA) and derivatives, natural products with neurochemical activity acting as ionotropic glutamate receptor (iGluR) agonists, thus being neurotoxins causing amnesic shellfish poisoning (ASP). This Pseudo-nitzschia multiseries (Marine planktonic diatom) protein is Domoic acid biosynthesis cluster protein B.